A 487-amino-acid chain; its full sequence is Protein nucleotidyltransferase YdiU (487 aa).

ATP is bound by residues Gly-90, Gly-92, Arg-93, Lys-113, Asp-125, Gly-126, Arg-176, and Arg-183. Asp-252 (proton acceptor) is an active-site residue. Mg(2+)-binding residues include Asn-253 and Asp-262. Asp-262 serves as a coordination point for ATP.

Belongs to the SELO family. Mg(2+) is required as a cofactor. Requires Mn(2+) as cofactor.

The enzyme catalyses L-seryl-[protein] + ATP = 3-O-(5'-adenylyl)-L-seryl-[protein] + diphosphate. It carries out the reaction L-threonyl-[protein] + ATP = 3-O-(5'-adenylyl)-L-threonyl-[protein] + diphosphate. The catalysed reaction is L-tyrosyl-[protein] + ATP = O-(5'-adenylyl)-L-tyrosyl-[protein] + diphosphate. It catalyses the reaction L-histidyl-[protein] + UTP = N(tele)-(5'-uridylyl)-L-histidyl-[protein] + diphosphate. The enzyme catalyses L-seryl-[protein] + UTP = O-(5'-uridylyl)-L-seryl-[protein] + diphosphate. It carries out the reaction L-tyrosyl-[protein] + UTP = O-(5'-uridylyl)-L-tyrosyl-[protein] + diphosphate. Its function is as follows. Nucleotidyltransferase involved in the post-translational modification of proteins. It can catalyze the addition of adenosine monophosphate (AMP) or uridine monophosphate (UMP) to a protein, resulting in modifications known as AMPylation and UMPylation. This Ectopseudomonas mendocina (strain ymp) (Pseudomonas mendocina) protein is Protein nucleotidyltransferase YdiU.